Consider the following 403-residue polypeptide: Large ribosomal subunit protein uL3 (403 aa).

Residues 1–37 (MSHRKFSAPRHGSLGFLPRKRSSRHRGKVKSFPKDDP) form a disordered region. Residue S13 is modified to Phosphoserine. Over residues 18-31 (PRKRSSRHRGKVKS) the composition is skewed to basic residues. K39 is covalently cross-linked (Glycyl lysine isopeptide (Lys-Gly) (interchain with G-Cter in SUMO2)). K136 bears the N6-acetyllysine mark. Residues K224 and K226 each participate in a glycyl lysine isopeptide (Lys-Gly) (interchain with G-Cter in SUMO2) cross-link. H245 is modified (tele-methylhistidine). Residues K286 and K294 each carry the N6-acetyllysine; alternate modification. Residue K286 forms a Glycyl lysine isopeptide (Lys-Gly) (interchain with G-Cter in SUMO2); alternate linkage. K294 is covalently cross-linked (Glycyl lysine isopeptide (Lys-Gly) (interchain with G-Cter in SUMO1); alternate). Position 304 is a phosphoserine (S304). The residue at position 366 (K366) is an N6-acetyllysine; alternate. K366 is covalently cross-linked (Glycyl lysine isopeptide (Lys-Gly) (interchain with G-Cter in SUMO2); alternate). K373 bears the N6-acetyllysine mark. Glycyl lysine isopeptide (Lys-Gly) (interchain with G-Cter in SUMO2) cross-links involve residues K386, K393, and K399.

This sequence belongs to the universal ribosomal protein uL3 family. Component of the large ribosomal subunit. Interacts with DHX33. Constitutively monomethylated at His-245 by METTL18. Methylation at His-245 regulates translation elongation by slowing ribosome traversal on tyrosine codons: slower elongation provides enough time for proper folding of synthesized proteins and prevents cellular aggregation of tyrosine-rich proteins. It is not required for incorporation of RPL3 into ribosomes.

It localises to the nucleus. The protein localises to the nucleolus. The protein resides in the cytoplasm. Component of the large ribosomal subunit. The ribosome is a large ribonucleoprotein complex responsible for the synthesis of proteins in the cell. In Homo sapiens (Human), this protein is Large ribosomal subunit protein uL3 (RPL3).